Reading from the N-terminus, the 641-residue chain is Pheromone-processing carboxypeptidase KEX1 (641 aa).

Residues 1 to 35 (MASTYSTPRWRTALLGGFLTTLPWLSSGMAGKTQA) form the signal peptide. The Lumenal portion of the chain corresponds to 36–515 (DYFIKSLPGA…KQAEWKAYYR (480 aa)). Asn118 carries an N-linked (GlcNAc...) asparagine glycan. Active-site residues include Ser182 and Asp382. N-linked (GlcNAc...) asparagine glycosylation is found at Asn433 and Asn441. Residue His444 is part of the active site. Positions 472 to 502 (VPSDSRIDGEKGPLTSVGDHPNSTRAEEDKA) are disordered. Asn493 is a glycosylation site (N-linked (GlcNAc...) asparagine). Residues 516–536 (SGQVALVVVVIVAALWGIFLW) traverse the membrane as a helical segment. The Cytoplasmic portion of the chain corresponds to 537–641 (RSRRRHTKTA…DGPKRKGGSS (105 aa)). The interval 585-641 (RELDDLDGASKKPGNGYASLGSEKERQSHNDSTFSLGGDSDDEAGSSDGPKRKGGSS) is disordered.

The protein belongs to the peptidase S10 family.

Its subcellular location is the golgi apparatus. The protein resides in the trans-Golgi network membrane. It carries out the reaction Preferential release of a C-terminal arginine or lysine residue.. Functionally, protease with a carboxypeptidase B-like function involved in the C-terminal processing of the lysine and arginine residues from protein precursors. Promotes cell fusion and is involved in the programmed cell death. The chain is Pheromone-processing carboxypeptidase KEX1 (KEX1) from Leptosphaeria maculans (strain JN3 / isolate v23.1.3 / race Av1-4-5-6-7-8) (Blackleg fungus).